Consider the following 388-residue polypeptide: Chorismate synthase (388 aa).

NADP(+) contacts are provided by R39 and R45. FMN-binding positions include 130-132 (RSS), 251-252 (NA), G296, 311-315 (KPIPT), and R337.

Belongs to the chorismate synthase family. As to quaternary structure, homotetramer. FMNH2 is required as a cofactor.

The enzyme catalyses 5-O-(1-carboxyvinyl)-3-phosphoshikimate = chorismate + phosphate. The protein operates within metabolic intermediate biosynthesis; chorismate biosynthesis; chorismate from D-erythrose 4-phosphate and phosphoenolpyruvate: step 7/7. Functionally, catalyzes the anti-1,4-elimination of the C-3 phosphate and the C-6 proR hydrogen from 5-enolpyruvylshikimate-3-phosphate (EPSP) to yield chorismate, which is the branch point compound that serves as the starting substrate for the three terminal pathways of aromatic amino acid biosynthesis. This reaction introduces a second double bond into the aromatic ring system. The sequence is that of Chorismate synthase from Streptococcus agalactiae serotype III (strain NEM316).